A 152-amino-acid polypeptide reads, in one-letter code: uncharacterized protein (152 aa).

5 helical membrane-spanning segments follow: residues 2-22 (GVVF…LKLM), 33-53 (LKMI…WLIM), 58-78 (FLIE…LIYL), 97-117 (FMGN…IEYV), and 122-142 (IASP…FFNC).

The protein resides in the cell membrane. This is an uncharacterized protein from Methanocaldococcus jannaschii (strain ATCC 43067 / DSM 2661 / JAL-1 / JCM 10045 / NBRC 100440) (Methanococcus jannaschii).